Consider the following 291-residue polypeptide: 33 kDa chaperonin (291 aa).

Disulfide bonds link Cys229/Cys231 and Cys262/Cys265.

The protein belongs to the HSP33 family. Post-translationally, under oxidizing conditions two disulfide bonds are formed involving the reactive cysteines. Under reducing conditions zinc is bound to the reactive cysteines and the protein is inactive.

The protein localises to the cytoplasm. Functionally, redox regulated molecular chaperone. Protects both thermally unfolding and oxidatively damaged proteins from irreversible aggregation. Plays an important role in the bacterial defense system toward oxidative stress. The sequence is that of 33 kDa chaperonin from Vibrio vulnificus (strain YJ016).